The primary structure comprises 319 residues: Mas-related G-protein coupled receptor member D (319 aa).

At 1–30 (MNYTPYSSPAPGLTISPTMDPVTWVYFSVT) the chain is on the extracellular side. Residues 31–51 (FLAMATCVCGIVGNSMVIWLL) traverse the membrane as a helical segment. Residues 52-64 (SFHRVQRSPFCTY) lie on the Cytoplasmic side of the membrane. The helical transmembrane segment at 65–85 (VLNLAVADLLFLLCMASLLSL) threads the bilayer. Topologically, residues 86 to 92 (ETGPLLT) are extracellular. A helical transmembrane segment spans residues 93-113 (ASTSARVYEGMKRIKYFAYTA). Topologically, residues 114-144 (GLSLLTAISTQRCLSVLFPIWYKCHRPQHLS) are cytoplasmic. The helical transmembrane segment at 145–165 (GVVCGVLWALALLMNFLASFF) threads the bilayer. Topologically, residues 166 to 184 (CVQFWHPDKYQCFKVDMVF) are extracellular. Residues 185-205 (NSLILGIFMPVMVLTSAIIFI) form a helical membrane-spanning segment. Over 206–220 (RMRKNSLLQRRQPRR) the chain is Cytoplasmic. Residues 221 to 241 (LYVVILTSVLVFLTCSLPLGI) form a helical membrane-spanning segment. At 242–260 (NWFLLYWVELPQAVRLLYV) the chain is on the extracellular side. A helical membrane pass occupies residues 261–281 (CSSRFSSSLSSSANPVIYFLV). The Cytoplasmic segment spans residues 282 to 319 (GSQKSHRLQESLGAVLGRALQDEPEGRETPSTCTNDGV).

This sequence belongs to the G-protein coupled receptor 1 family. Mas subfamily. Co-expressed in the small diameter neurons with P2X3 and VR1 in dorsal root ganglia.

Its subcellular location is the cell membrane. Functionally, may regulate nociceptor function and/or development, including the sensation or modulation of pain. Functions as a specific membrane receptor for beta-alanine. The receptor couples with G-protein G(q) and G(i). The sequence is that of Mas-related G-protein coupled receptor member D (Mrgprd) from Rattus norvegicus (Rat).